A 584-amino-acid polypeptide reads, in one-letter code: Arginine--tRNA ligase (584 aa).

The 'HIGH' region motif lies at 126 to 136 (PNIAKEMHVGH).

It belongs to the class-I aminoacyl-tRNA synthetase family. Monomer.

Its subcellular location is the cytoplasm. The catalysed reaction is tRNA(Arg) + L-arginine + ATP = L-arginyl-tRNA(Arg) + AMP + diphosphate. The sequence is that of Arginine--tRNA ligase from Synechococcus sp. (strain ATCC 27144 / PCC 6301 / SAUG 1402/1) (Anacystis nidulans).